The sequence spans 513 residues: Protein disulfide-isomerase (513 aa).

A signal peptide spans 1-23; sequence MAIRSKAWISLLLALAVALSARA. Residues 24–145 enclose the Thioredoxin 1 domain; the sequence is EEEPAAAAEG…IVDYLKKQVG (122 aa). Catalysis depends on nucleophile residues Cys63 and Cys66. Cys63 and Cys66 are disulfide-bonded. Asn279 carries an N-linked (GlcNAc...) asparagine glycan. Residues 366 to 485 enclose the Thioredoxin 2 domain; sequence FRNSEPIPEV…IVDFIKKSKE (120 aa). Catalysis depends on nucleophile residues Cys408 and Cys411. A disulfide bridge links Cys408 with Cys411. The segment at 485–513 is disordered; sequence ETAAPHHHHHPGATGIREGSRAEPVKDEL. The span at 502–513 shows a compositional bias: basic and acidic residues; it reads EGSRAEPVKDEL. Residues 510–513 carry the Prevents secretion from ER motif; the sequence is KDEL.

It belongs to the protein disulfide isomerase family.

The protein resides in the endoplasmic reticulum lumen. The catalysed reaction is Catalyzes the rearrangement of -S-S- bonds in proteins.. In terms of biological role, participates in the folding of proteins containing disulfide bonds, may be involved in glycosylation, prolyl hydroxylation and triglyceride transfer. The sequence is that of Protein disulfide-isomerase (PDI) from Zea mays (Maize).